The following is a 261-amino-acid chain: Thiazole synthase (261 aa).

The active-site Schiff-base intermediate with DXP is K97. Residues G158, 184-185 (AG), and 206-207 (AS) contribute to the 1-deoxy-D-xylulose 5-phosphate site.

This sequence belongs to the ThiG family. As to quaternary structure, homotetramer. Forms heterodimers with either ThiH or ThiS.

Its subcellular location is the cytoplasm. The catalysed reaction is [ThiS sulfur-carrier protein]-C-terminal-Gly-aminoethanethioate + 2-iminoacetate + 1-deoxy-D-xylulose 5-phosphate = [ThiS sulfur-carrier protein]-C-terminal Gly-Gly + 2-[(2R,5Z)-2-carboxy-4-methylthiazol-5(2H)-ylidene]ethyl phosphate + 2 H2O + H(+). It functions in the pathway cofactor biosynthesis; thiamine diphosphate biosynthesis. Catalyzes the rearrangement of 1-deoxy-D-xylulose 5-phosphate (DXP) to produce the thiazole phosphate moiety of thiamine. Sulfur is provided by the thiocarboxylate moiety of the carrier protein ThiS. In vitro, sulfur can be provided by H(2)S. This Corynebacterium diphtheriae (strain ATCC 700971 / NCTC 13129 / Biotype gravis) protein is Thiazole synthase.